We begin with the raw amino-acid sequence, 440 residues long: Ribosomal protein uS12 methylthiotransferase RimO (440 aa).

In terms of domain architecture, MTTase N-terminal spans 5-115 (PTVGFVSLGC…VVNAVHEVVP (111 aa)). Residues Cys14, Cys50, Cys79, Cys148, Cys152, and Cys155 each contribute to the [4Fe-4S] cluster site. The Radical SAM core domain occupies 134–372 (LTPRHYAYLK…MAHQQAISAA (239 aa)). Residues 375–440 (QLKVGKELDV…DEYDLWAEVI (66 aa)) enclose the TRAM domain.

It belongs to the methylthiotransferase family. RimO subfamily. It depends on [4Fe-4S] cluster as a cofactor.

Its subcellular location is the cytoplasm. It carries out the reaction L-aspartate(89)-[ribosomal protein uS12]-hydrogen + (sulfur carrier)-SH + AH2 + 2 S-adenosyl-L-methionine = 3-methylsulfanyl-L-aspartate(89)-[ribosomal protein uS12]-hydrogen + (sulfur carrier)-H + 5'-deoxyadenosine + L-methionine + A + S-adenosyl-L-homocysteine + 2 H(+). Its function is as follows. Catalyzes the methylthiolation of an aspartic acid residue of ribosomal protein uS12. The polypeptide is Ribosomal protein uS12 methylthiotransferase RimO (Stutzerimonas stutzeri (strain A1501) (Pseudomonas stutzeri)).